The chain runs to 70 residues: MNLLAAGIAAGLAAVGGAIAVAIIVKATLEGVTRQPELRGSLQTLMFIGVPLAEAVPIIAIVVSFILLFT.

The next 2 helical transmembrane spans lie at 5-25 (AAGI…AIIV) and 47-67 (FIGV…SFIL).

It belongs to the ATPase C chain family. As to quaternary structure, F-type ATPases have 2 components, F(1) - the catalytic core - and F(0) - the membrane proton channel. F(1) has five subunits: alpha(3), beta(3), gamma(1), delta(1), epsilon(1). F(0) has three main subunits: a(1), b(2) and c(10-14). The alpha and beta chains form an alternating ring which encloses part of the gamma chain. F(1) is attached to F(0) by a central stalk formed by the gamma and epsilon chains, while a peripheral stalk is formed by the delta and b chains.

It localises to the cell membrane. F(1)F(0) ATP synthase produces ATP from ADP in the presence of a proton or sodium gradient. F-type ATPases consist of two structural domains, F(1) containing the extramembraneous catalytic core and F(0) containing the membrane proton channel, linked together by a central stalk and a peripheral stalk. During catalysis, ATP synthesis in the catalytic domain of F(1) is coupled via a rotary mechanism of the central stalk subunits to proton translocation. Functionally, key component of the F(0) channel; it plays a direct role in translocation across the membrane. A homomeric c-ring of between 10-14 subunits forms the central stalk rotor element with the F(1) delta and epsilon subunits. This Halalkalibacterium halodurans (strain ATCC BAA-125 / DSM 18197 / FERM 7344 / JCM 9153 / C-125) (Bacillus halodurans) protein is ATP synthase subunit c.